A 240-amino-acid chain; its full sequence is Ubiquinone biosynthesis O-methyltransferase (240 aa).

S-adenosyl-L-methionine is bound by residues arginine 44, glycine 64, aspartate 85, and methionine 129.

It belongs to the methyltransferase superfamily. UbiG/COQ3 family.

The catalysed reaction is a 3-demethylubiquinol + S-adenosyl-L-methionine = a ubiquinol + S-adenosyl-L-homocysteine + H(+). The enzyme catalyses a 3-(all-trans-polyprenyl)benzene-1,2-diol + S-adenosyl-L-methionine = a 2-methoxy-6-(all-trans-polyprenyl)phenol + S-adenosyl-L-homocysteine + H(+). It participates in cofactor biosynthesis; ubiquinone biosynthesis. In terms of biological role, O-methyltransferase that catalyzes the 2 O-methylation steps in the ubiquinone biosynthetic pathway. This Escherichia coli O8 (strain IAI1) protein is Ubiquinone biosynthesis O-methyltransferase.